The primary structure comprises 130 residues: Albumin-1 F (130 aa).

A signal peptide spans M1–A26. Cystine bridges form between C29/C46, C33/C48, and C41/C58. 2 consecutive propeptides follow at residues V64–N69 and L123–A130.

The C-terminal glycine may be removed from PA1b.

Functionally, PA1b binds to basic 7S globulin (BG) and stimulates its phosphorylation activity. Involved in the signal transduction system to regulate the growth and differentiation as a hormone peptide. Toxic to various insects through binding to a high affinity binding site in the insect gut. The sequence is that of Albumin-1 F from Pisum sativum (Garden pea).